The primary structure comprises 295 residues: ATP synthase gamma chain (295 aa).

It belongs to the ATPase gamma chain family. In terms of assembly, F-type ATPases have 2 components, CF(1) - the catalytic core - and CF(0) - the membrane proton channel. CF(1) has five subunits: alpha(3), beta(3), gamma(1), delta(1), epsilon(1). CF(0) has three main subunits: a, b and c.

The protein localises to the cell inner membrane. Produces ATP from ADP in the presence of a proton gradient across the membrane. The gamma chain is believed to be important in regulating ATPase activity and the flow of protons through the CF(0) complex. This is ATP synthase gamma chain from Bdellovibrio bacteriovorus (strain ATCC 15356 / DSM 50701 / NCIMB 9529 / HD100).